A 1122-amino-acid chain; its full sequence is Desmoglein-2 (1122 aa).

The first 28 residues, 1 to 28, serve as a signal peptide directing secretion; the sequence is MARSPGDRCALLLLVQLLAVVCLDFGNG. The propeptide occupies 29–54; sequence LHLEVFSPRNEGKPFPKHTHLVRQKR. Cadherin domains lie at 55 to 164, 165 to 277, 278 to 398, and 397 to 504; these read AWIT…EPVF, TQEV…IPVV, ENKM…SSVV, and VVSF…CPVL. Over 55 to 618 the chain is Extracellular; the sequence is AWITAPVALR…YDNYVGLGPA (564 aa). The N-linked (GlcNAc...) asparagine glycan is linked to N117. 3 N-linked (GlcNAc...) asparagine glycosylation sites follow: N314, N467, and N519. A helical membrane pass occupies residues 619-639; that stretch reads AIALMILALLLLLLVPLLLLI. The Cytoplasmic portion of the chain corresponds to 640–1122; it reads CHCGGGAKGF…KHSTMQHSYS (483 aa). Residues S685, S706, S709, and S729 each carry the phosphoserine modification. T808 carries the phosphothreonine modification. Phosphoserine is present on residues S810, S814, and S819. Desmoglein repeat repeat units follow at residues 885–916, 917–945, 946–971, 972–995, 996–1024, and 1025–1055; these read AYSSNTGFPAPKPLHEVHTEKVTQEIVTESSV, SSRQSQKVVPPPDPVASGNIIVTETSYAK, GSAVPPSTVLLAPRQPQSLIVTERVY, APTSTLVDQHYANEEKVLVTERVI, QPNGGIPKPLEVTQHLKDAQYVMVRERES, and ILAPSSGVQPTLAMPSVAAGGQNVTVTERIL. The interval 913–932 is disordered; it reads ESSVSSRQSQKVVPPPDPVA. Over residues 914 to 924 the composition is skewed to low complexity; that stretch reads SSVSSRQSQKV. Residues 1089-1122 form a disordered region; sequence LPNLDLEESDRPNSTITTSSTRVTKHSTMQHSYS. Residues 1100–1122 show a composition bias toward polar residues; sequence PNSTITTSSTRVTKHSTMQHSYS. S1122 carries the post-translational modification Phosphoserine.

Interacts with PKP2. Interacts with CTNNB1; the interaction promotes localization of CTNNB1 at cell junctions thus reducing its nuclear localization and subsequent transcription of CTNNB1/TCF-target genes. Palmitoylated by ZDHHC5 at the plasma membrane. In terms of tissue distribution, expressed in undifferentiated pluripotent stem cells, expression decreases during differentiation (at protein level). Expressed by embryonic stem cells, expression is reduced during differentiation (at protein level). Expressed at the apical-lateral cell membrane of kidney tubular epithelial cells (at protein level). Expressed in epidermis and heart (at protein level). Expressed in the brain, spleen, lung, liver skeletal muscle, kidney and testis.

The protein localises to the cell membrane. It is found in the cell junction. Its subcellular location is the desmosome. The protein resides in the cytoplasm. In terms of biological role, a component of desmosome cell-cell junctions which are required for positive regulation of cellular adhesion. Involved in the interaction of plaque proteins and intermediate filaments mediating cell-cell adhesion. Required for proliferation and viability of embryonic stem cells in the blastocyst, thereby crucial for progression of post-implantation embryonic development. Maintains pluripotency by regulating epithelial to mesenchymal transition/mesenchymal to epithelial transition (EMT/MET) via interacting with and sequestering CTNNB1 to sites of cell-cell contact, thereby reducing translocation of CTNNB1 to the nucleus and subsequent transcription of CTNNB1/TCF-target genes. Promotes pluripotency and the multi-lineage differentiation potential of hematopoietic stem cells. Plays a role in endothelial cell sprouting and elongation via mediating the junctional-association of cortical actin fibers and CDH5. Plays a role in limiting inflammatory infiltration and the apoptotic response to injury in kidney tubular epithelial cells, potentially via its role in maintaining cell-cell adhesion and the epithelial barrier. This is Desmoglein-2 (Dsg2) from Mus musculus (Mouse).